The primary structure comprises 283 residues: 4-diphosphocytidyl-2-C-methyl-D-erythritol kinase (283 aa).

K11 is an active-site residue. 94–104 (PVAAGLAGGSA) is a binding site for ATP. Residue D136 is part of the active site.

It belongs to the GHMP kinase family. IspE subfamily.

The catalysed reaction is 4-CDP-2-C-methyl-D-erythritol + ATP = 4-CDP-2-C-methyl-D-erythritol 2-phosphate + ADP + H(+). The protein operates within isoprenoid biosynthesis; isopentenyl diphosphate biosynthesis via DXP pathway; isopentenyl diphosphate from 1-deoxy-D-xylulose 5-phosphate: step 3/6. In terms of biological role, catalyzes the phosphorylation of the position 2 hydroxy group of 4-diphosphocytidyl-2C-methyl-D-erythritol. In Acetivibrio thermocellus (strain ATCC 27405 / DSM 1237 / JCM 9322 / NBRC 103400 / NCIMB 10682 / NRRL B-4536 / VPI 7372) (Clostridium thermocellum), this protein is 4-diphosphocytidyl-2-C-methyl-D-erythritol kinase.